The primary structure comprises 176 residues: Probable inosine/xanthosine triphosphatase (176 aa).

Asp36 serves as a coordination point for Mg(2+).

This sequence belongs to the YjjX NTPase family. As to quaternary structure, homodimer. Mg(2+) serves as cofactor. Mn(2+) is required as a cofactor.

It catalyses the reaction XTP + H2O = XDP + phosphate + H(+). The enzyme catalyses ITP + H2O = IDP + phosphate + H(+). Functionally, phosphatase that hydrolyzes non-canonical purine nucleotides such as XTP and ITP to their respective diphosphate derivatives. Probably excludes non-canonical purines from DNA/RNA precursor pool, thus preventing their incorporation into DNA/RNA and avoiding chromosomal lesions. The chain is Probable inosine/xanthosine triphosphatase from Saccharolobus islandicus (strain M.14.25 / Kamchatka #1) (Sulfolobus islandicus).